The chain runs to 282 residues: Snake venom serine protease NaSP (282 aa).

The signal sequence occupies residues 1 to 18 (MVLIRVLASLLILQLSYS). Residues 19 to 56 (KSLDDGAKESAYDDEIQQSSWGNSTVNTTLTETVVIQL) constitute a propeptide that is removed on maturation. 2 N-linked (GlcNAc...) asparagine glycosylation sites follow: Asn41 and Asn45. A Peptidase S1 domain is found at 57–280 (IMGGSECYKS…YIDWIRGIIA (224 aa)). Disulfide bonds link Cys63–Cys195, Cys82–Cys98, Cys174–Cys241, Cys206–Cys220, and Cys231–Cys256. Residue His97 is the Charge relay system of the active site. The N-linked (GlcNAc...) asparagine glycan is linked to Asn135. The Charge relay system role is filled by Asp142. 2 N-linked (GlcNAc...) asparagine glycosylation sites follow: Asn149 and Asn153. The Charge relay system role is filled by Ser235.

This sequence belongs to the peptidase S1 family. Snake venom subfamily. As to quaternary structure, monomer. In terms of tissue distribution, expressed by the venom gland.

The protein resides in the secreted. Its function is as follows. Snake venom serine protease that may act in the hemostasis system of the prey. The sequence is that of Snake venom serine protease NaSP from Naja atra (Chinese cobra).